Reading from the N-terminus, the 2603-residue chain is MAASPAKFFFGFLIVSIVLWMIFMLFAWMLSRVLGASVVFRVGGWKCLKDVVVKFKKGAIESVSASEIKLSLRQSLVKLGVGFLSRDPKVQVLISDLEVVMRSSTSTTNLQKAKSHKPRTSGRGKWMVVANVARFLSVSVADMVVKTTKVIVEVKELKLDINKDGGTKPNLYVKLNVLPILVHLCESRIISDQSSNVSFECCPASQASSASPDRSAATLFCDELSLSSEFGHDRAVGIVVRNVEVTSGDVILNFDEDSFPKSKQSSASLRSDEVRTSATAASSAKKPHKEHQLVAALAKYSSSFPEKVSFSLPKLDVRCVNREHDLLAENNITGIQLRSVKSKSFEDTGESTRLDVQMELSEIHVFREADSSILEIMKVDVVSFIYIPVQPVLPIRAEVDIKLGGTRCNLFISRLQPWLRLHFLKKKKLVLQEKTHNLEKTKAADMKAIMWTGTVSAPEMTVMLYGTEDIPLYHFCSQSSHVFANNVSSLGTAVHVELGELNLHLADEYQECFREHLFGIEPNSGSLMHIAKVSLDWGRRDRTSSDEVGFRSKLVLSVDVTGMGIYFSFKRVQSLIINALSFKALFKTLSVTGKKMNKTVSVQPSKGSGKGTRLVNINLERCCVNFCDDTGLDNTVIDDPKSVNYGSQGGRVSFSSLADGTPRTASILSTAPEACKRLKYSVSLEISQFSFCLNKDKLSTQMELGRAKSIYQEYLEEHTPCSNVILFDMHNAKLVRRSGGLNEIDVCSLFSATHISLGWEPDVHLSFYELFLRLRSLVYAQRHKEPESGCNKGISSVKDGGPSEKINQSNSVNKQKKKESMFAIDVETLTISAEVGDGVEVKLEAQSIFSENACIGVLLEGLMLAFNGSRVFKTTRMQVSRIPTATNLSDAVPVMTDGPWDWVVQGLDVHICMPYKLQLRAIDDSIEEMLRGLKLISVAKGKHILSGKRESSKPKKSSPKFGRIKFCIRRLTADIEEEPIQGWLDEHYQLVKKEACELAVRLKFLEDLIHKAGQSPKGAETSAVLDERKMFFDGVEIDVEDPVAINKVKEEIHKRSFQSYYQACQGLAPSEGSGACREGFQAGFKPSAARTSLLSVCATDFDLSLTAVHGGDAGLIEVLKKLDPICEENDIPFSRLYGSNVYLNTGSLVVQLRNYTLPLLSGTSGKCEGRIVLAQQATCFQPQISQDVFVGRWRKVKMFRSASGTTPPLKTYSDLRIHFEQGEVSFGVGYEPAFADISYAFTVALRRANLSHRNPDMVQVIKKERSLPWWDDMRNYVHGNITLSFSESKWSVLATTDPYESLDQLQIVSGPIELKQSDGRVFVSAKDFKIKLSSLESLISRHSLKVPVRASGAAFIEAPDFNLEVTMDWDCESGNSLNHYLYAFPAEGKPREKVFDPFRSTSLSLRWNFSLRPEKFHQSPSSTEHPTDVGTVYSSQDKPDSIPLASPTMNLGAHDLAWILKFWGLNYYPPHKLRSFSRWPRFGVPRAARSGNLSLDKVMTEFMLRVDATPSLIKYMPWDSDDPAKGLTFNMAKLKYELCYSRGKQKYTFECKRDALDLVYQGLDLHVPKAFINKDEHPCIPGSVQVLRKSTQDALIDRVPSGKDHKRYEKHRDEGFLLSSDYFTIRRQAPKADPERLLAWQEAGRRNLEMTYVRSEFENGSESDEHIRSDPSDDDGYNVVIADNCQRVFVYGLKLLWTIENRDAVWSFVGGISKAFEPPKPSPSRQYTQRKIHEENQKESCPETHQGEMSRSSASPGRNLPSSPSHSIKIEKSDDIGTVETIESEEEGTRHFMVNVIEPQFNLHSEEANGRFLLAAVSGRVLARSFHSIMRVGVEVIEQALGTGSVKIPECSPEMTWTRMEVSVMLEHVQAHVAPTDVDPGAGLQWLPKIRRNSPKVKRTGALLERVFMPCDMYFRYTRHKGGTPDLKVKPLKELTFNSHNIIATMTSRQFQVMLDVLTNLLFARLPKPRKSSLQCPTEDEDVEEEADEVVPYGVEEVELAKINLEEKERERKLLLDDIRKLSPCSDNMDDTHIEREGELWMISTRRSILVQGLKKELTYAQKSRKAASASLRMALQKAAQLRIMEKEKNKSPSYAMCISLQINKVVWSMLVDGKSFAEAEINDMIYDFDRDYKDIGVARFTTKYFVVRNCLPNAKSDMLLSAWNPPPEWGKKVMLRVDAKQGAPKDAHYPLELFHVEIYPLRIHLTETMYRMMWEYFFPEEEQDSQSRQEVWKISTTAGSKRVKKGLVGHESSGHAIKDVEASRMSSSALSASAAVQSQSNDDSVQKSNVICLRSSTGASAQELRRTSSFDREENVAEPIANELVLQAHSCNVSSSIEQQEDFSKQKVKEIKPVKSGRSSHEEKKAGKSHEEKKSRPRKMMEFHNIKISQVELLVTYEGSRFVVNDLKLLMDTFHRVEFTGTWRRLFSRVKKHIIWGVLKSVTGMQGKKFKDKSHNNRESTDNDLNLSDNDQTGKPDQQQVTWFKRQSDGAGDGFVTSIRGLFNTQRRKAKAFVLRTMRGEAENDFHGDWSDSDVEFSPFARQLTITKAKRLIRRHTKKFRPRSQRGSTSQQRESLPSSPIETTPFESGYSSGSSPYEDFRE.

Positions 1-35 are cleaved as a signal peptide; the sequence is MAASPAKFFFGFLIVSIVLWMIFMLFAWMLSRVLG. An N-linked (GlcNAc...) asparagine glycan is attached at N196. The tract at residues 259 to 287 is disordered; that stretch reads FPKSKQSSASLRSDEVRTSATAASSAKKP. 10 N-linked (GlcNAc...) asparagine glycosylation sites follow: N331, N486, N597, N807, N867, N887, N1154, N1249, N1280, and N1408. The tract at residues 786–814 is disordered; that stretch reads PESGCNKGISSVKDGGPSEKINQSNSVNK. Residues 1416–1436 are disordered; sequence FHQSPSSTEHPTDVGTVYSSQ. N-linked (GlcNAc...) asparagine glycans are attached at residues N1492 and N1659. Disordered regions lie at residues 1656–1676 and 1717–1777; these read EFEN…DDDG and EPPK…DDIG. The segment covering 1731-1748 has biased composition (basic and acidic residues); sequence KIHEENQKESCPETHQGE. A compositionally biased stretch (polar residues) spans 1749–1766; that stretch reads MSRSSASPGRNLPSSPSH. A coiled-coil region spans residues 1995–2023; that stretch reads VEEVELAKINLEEKERERKLLLDDIRKLS. An N-linked (GlcNAc...) asparagine glycan is attached at N2333. Disordered stretches follow at residues 2339-2380, 2448-2479, and 2554-2603; these read EQQE…RPRK, GKKF…KPDQ, and IRRH…DFRE. A compositionally biased stretch (basic and acidic residues) spans 2343 to 2380; sequence DFSKQKVKEIKPVKSGRSSHEEKKAGKSHEEKKSRPRK. N2467 carries an N-linked (GlcNAc...) asparagine glycan. Over residues 2554-2565 the composition is skewed to basic residues; that stretch reads IRRHTKKFRPRS. The span at 2566-2583 shows a compositional bias: polar residues; that stretch reads QRGSTSQQRESLPSSPIE. Residues 2586–2603 are compositionally biased toward low complexity; the sequence is PFESGYSSGSSPYEDFRE.

It belongs to the SABRE family. As to expression, highest levels in leaves, also expressed in leaves, flowers, and siliques, and, to a lower extent, in roots and stems.

It is found in the secreted. Its subcellular location is the golgi apparatus. In terms of biological role, may be involved in membrane trafficking. Required for cell expansion, especially in root cortex, probably by counteracting the action of ethylene in promoting cells radial expansion. Involved in female organ development. Antagonistically interacts with ethylene signaling to regulate plant responses to Pi starvation. The protein is Protein SABRE of Arabidopsis thaliana (Mouse-ear cress).